A 147-amino-acid polypeptide reads, in one-letter code: Protein phosphatase 1 regulatory subunit 14A (147 aa).

Over residues 1–11 (MAAQRLGKRVL) the composition is skewed to basic residues. The segment at 1–37 (MAAQRLGKRVLSKLQSPSRARGPGGSPGGLQKRHARV) is disordered. S26 carries the phosphoserine modification. The interval 35–120 (ARVTVKYDRR…LLVKLRGLHK (86 aa)) is inhibitory. Phosphothreonine is present on T38. The disordered stretch occupies residues 118–147 (LHKQPGLRQPSPSGDGSLSPRQDRARTAPP). Residues 127–137 (PSPSGDGSLSP) show a composition bias toward polar residues. A phosphoserine mark is found at S128, S134, and S136. Over residues 138–147 (RQDRARTAPP) the composition is skewed to basic and acidic residues.

It belongs to the PP1 inhibitor family. Phosphorylation of Thr-38 induces a conformation change. Detected in aorta smooth muscle and bladder.

The protein localises to the cytoplasm. In terms of biological role, inhibitor of PPP1CA. Has over 1000-fold higher inhibitory activity when phosphorylated, creating a molecular switch for regulating the phosphorylation status of PPP1CA substrates and smooth muscle contraction. The polypeptide is Protein phosphatase 1 regulatory subunit 14A (CPI17) (Sus scrofa (Pig)).